Here is a 255-residue protein sequence, read N- to C-terminus: CD320 antigen (255 aa).

Positions 1–29 are cleaved as a signal peptide; the sequence is MNGWVARGLARRAAALGLGLRVLLCFGLC. Over 30–203 the chain is Extracellular; that stretch reads LEIAPTPIQT…SVQSGNRNVY (174 aa). 2 LDL-receptor class A domains span residues 52–89 and 120–157; these read SCPPTNFQCRSDGRCLPLIWRCDVDQDCPDGSDEEECG and SCPEGELCCPLDGVCIPSTWLCDGHRDCSDYSDELGCG. 6 disulfide bridges follow: Cys53/Cys66, Cys60/Cys79, Cys73/Cys88, Cys121/Cys134, Cys128/Cys147, and Cys141/Cys156. Residues Trp71, Asp74, Asp76, Asp78, Asp84, and Glu85 each coordinate Ca(2+). The Ca(2+) site is built by Trp139, Asp142, His144, Asp146, Asp152, and Glu153. Residues Asn177 and Asn183 are each glycosylated (N-linked (GlcNAc...) asparagine). The chain crosses the membrane as a helical span at residues 204-224; it reads GIIAAVAVLSISLAAGILFAL. Residues 225-255 lie on the Cytoplasmic side of the membrane; the sequence is SRLCAQGCLAPLGLLVSMKGSLQPEKKTSVL.

In terms of assembly, interacts (via LDL-receptor class A domains) with TCN2.

It is found in the cell membrane. Functionally, receptor for transcobalamin saturated with cobalamin (TCbl). Plays an important role in cobalamin uptake. Plasma membrane protein that is expressed on follicular dendritic cells (FDC) and mediates interaction with germinal center B cells. Functions as a costimulator to promote B cell responses to antigenic stimuli; promotes B cell differentiation and proliferation. Germinal center-B (GC-B) cells differentiate into memory B-cells and plasma cells (PC) through interaction with T-cells and follicular dendritic cells (FDC). CD320 augments the proliferation of PC precursors generated by IL-10. The polypeptide is CD320 antigen (CD320) (Bos taurus (Bovine)).